The primary structure comprises 1583 residues: Methyl-CpG-binding domain protein 5/6 homolog sba (1583 aa).

Residues 81–115 are disordered; it reads AVHQQQQQHHHQQQQQQQHQQQQQILPAGLVNGNG. The segment covering 83–104 has biased composition (low complexity); it reads HQQQQQHHHQQQQQQQHQQQQQ. The region spanning 238-308 is the MBD domain; it reads RKTATSYNGN…YLFDFNAQVP (71 aa). Disordered stretches follow at residues 427–457, 556–579, 630–694, 839–862, 940–980, 1179–1247, and 1287–1339; these read NKLP…PTSQ, EPIV…QQQL, VTLV…QTQV, AELH…AASS, PPAQ…ISPQ, VMSR…RSIC, and QESP…SFPL. Residues 430–439 are compositionally biased toward low complexity; the sequence is PATNRTATTP. Residues 440-449 are compositionally biased toward pro residues; that stretch reads TPAPTPPPQH. A compositionally biased stretch (low complexity) spans 563–579; it reads QQQQQQQQQQLQQQQQL. Positions 658-677 are enriched in polar residues; the sequence is AISTSHESPRQSLSSPTDSV. Low complexity-rich tracts occupy residues 679–693 and 851–862; these read SAKS…PQTQ and VSQPSPVAAASS. Polar residues-rich tracts occupy residues 1179 to 1195, 1216 to 1240, and 1287 to 1313; these read VMSR…TTTC, CVSS…PSST, and QESP…TVRT. The span at 1323 to 1333 shows a compositional bias: low complexity; sequence RGAARAAPSAS. The PWWP domain maps to 1346–1408; sequence IGELIWGPAR…VNSLQSLSEG (63 aa). A coiled-coil region spans residues 1415–1446; sequence AQKDTRKSRKLNSQLERAIQEAMTELDNISAS. The disordered stretch occupies residues 1471–1497; sequence IGGQQQYQQQQQQQQQQQSPSSTNNKI. Residues 1474–1488 show a composition bias toward low complexity; that stretch reads QQQYQQQQQQQQQQQ.

In terms of assembly, component of the polycomb repressive deubiquitinase (PR-DUB) complex, at least composed of caly/calypso, Asx and sba (MDB5/6 homolog). Interacts (via MBD domain) with Asx (via PHD domain); the interaction is important for the stability of the PR-DUB complex.

Non-catalytic component of the polycomb repressive deubiquitinase (PR-DUB) complex, a complex that specifically mediates deubiquitination of histone H2A monoubiquitinated at 'Lys-119' (H2AK118ub1). Important for maintaining stability of the PR-DUB complex. Probable epigenetic regulator involved in developmental pattern formation and eye development. This Drosophila melanogaster (Fruit fly) protein is Methyl-CpG-binding domain protein 5/6 homolog sba.